The sequence spans 495 residues: Cyclic GMP-AMP synthase (495 aa).

The disordered stretch occupies residues 1–128; it reads MAARRGKSTR…AGATELAAPA (128 aa). The segment at 1 to 134 is DNA-binding; sequence MAARRGKSTR…AAPARMEAPP (134 aa). Lys7 carries the N6-acetyllysine modification. Ser13 bears the Phosphoserine mark. Composition is skewed to basic and acidic residues over residues 52–76 and 105–116; these read CRRE…RAED and RAREARSARELR. An N6-acetyllysine modification is found at Lys56. The residue at position 57 (Ser57) is a Phosphoserine. A required for association with the cell membrane region spans residues 57 to 68; that stretch reads SGPDPREKPQVR. The tract at residues 103–134 is required for activation upon DNA viral infection; the sequence is SCRAREARSARELRPQAGATELAAPARMEAPP. A Nuclear export signal motif is present at residues 143 to 148; the sequence is LEKVRL. An N6-lactoyllysine modification is found at Lys145. Residues 147–190 are DNA-binding; the sequence is RLSRHEISEAAEVVNWVVEHLLRRLQGGESEFKGVALLRTGSYY. Position 165 is a polyADP-ribosyl glutamic acid (Glu165). Residue Thr186 coordinates GTP. Ser188 carries the post-translational modification Phosphoserine. Ser188 is a binding site for ATP. Tyr190 bears the Phosphotyrosine mark. Positions 200 and 202 each coordinate Mg(2+). A 2',3'-cGAMP-binding site is contributed by Asp202. Residue Lys206 forms a Glycyl lysine isopeptide (Lys-Gly) (interchain with G-Cter in SUMO) linkage. Lys260 participates in a covalent cross-link: Glycyl lysine isopeptide (Lys-Gly) (interchain with G-Cter in ubiquitin). Glu261 carries the post-translational modification 5-glutamyl polyglutamate. The Nuclear localization signal signature appears at 268-278; that stretch reads GVTVERKRRGS. Position 278 is a phosphoserine (Ser278). Position 294 (Asp294) interacts with GTP. Residue Asp294 coordinates Mg(2+). Asp294 contributes to the 2',3'-cGAMP binding site. The interaction with collided ribosomes stretch occupies residues 316-357; it reads SQWLGAKVKNNLKRQPFYLVPKHAKEGSGFQEETWRLSFSHI. Residue Lys322 forms a Glycyl lysine isopeptide (Lys-Gly) (interchain with G-Cter in SUMO); alternate linkage. Lys322 participates in a covalent cross-link: Glycyl lysine isopeptide (Lys-Gly) (interchain with G-Cter in ubiquitin); alternate. 2',3'-cGAMP-binding residues include Lys337 and Arg351. 351–358 is a GTP binding site; it reads RLSFSHIE. Residue Glu358 coordinates ATP. Lys359 carries the post-translational modification N6-acetyllysine. Lys359 is covalently cross-linked (Glycyl lysine isopeptide (Lys-Gly) (interchain with G-Cter in SUMO); alternate). Lys359 participates in a covalent cross-link: Glycyl lysine isopeptide (Lys-Gly) (interchain with G-Cter in ubiquitin); alternate. Residues 359-382 form a DNA-binding region; the sequence is KDILKNHGQSKTCCEIDGVKCCRK. His365 contacts Zn(2+). At Lys369 the chain carries N6-acetyllysine. Lys369 participates in a covalent cross-link: Glycyl lysine isopeptide (Lys-Gly) (interchain with G-Cter in SUMO). Zn(2+)-binding residues include Cys371, Cys372, and Cys379. S-palmitoyl cysteine attachment occurs at residues Cys379 and Cys380. Glycyl lysine isopeptide (Lys-Gly) (interchain with G-Cter in ubiquitin) cross-links involve residues Lys386, Lys389, Lys396, and Lys397. Lys389 carries the N6-acetyllysine modification. Lys389 serves as a coordination point for ATP. At Ser410 the chain carries Phosphoserine. An ATP-binding site is contributed by 410–414; that stretch reads SYHVK. Cys449 is lipidated: S-palmitoyl cysteine. Lys481 carries the N6-methyllysine modification.

This sequence belongs to the mab-21 family. In terms of assembly, monomer in the absence of DNA. Homodimer in presence of dsDNA: forms a 2:2 dimer with two enzymes binding to two DNA molecules. Interacts with nucleosomes; interaction is mainly mediated via histones H2A and H2B and inactivates the nucleotidyltransferase activity by blocking DNA-binding and subsequent activation. Interacts with PQBP1 (via WW domain). Interacts with TRIM14; this interaction recruits USP14, leading to deubiquitinate and stabilize CGAS and promote type I interferon production. Interacts with ZCCHC3; promoting sensing of dsDNA by CGAS. Interacts (when not monomethylated) with (poly-ADP-ribosylated) PARP1; interaction takes place in the nucleus and prevents the formation of the PARP1-TIMELESS complex. Interacts (when monomethylated) with SGF29; interaction with SGF29 prevents interaction with PARP1. Interacts with PCBP2; preventing the formation of liquid-like droplets in which CGAS is activated. Interacts with IRGM; promoting CGAS degradation. The cofactor is Mg(2+). Mn(2+) serves as cofactor. Zn(2+) is required as a cofactor. The N-terminal disordered part (1-134) is phosphorylated by AURKB during the G2-M transition, blocking CGAS liquid phase separation and preventing activation. Phosphorylation at Tyr-190 by BLK promotes cytosolic retention. Localizes into the nucleus following dephosphorylation at Tyr-190. Phosphorylation at Ser-410 activates the nucleotidyltransferase activity. Dephosphorylation at Ser-410 by PPP6C impairs its ability to bind GTP, thereby inactivating it. Phosphorylation at Ser-188 by PRKDC inhibits its cyclic GMP-AMP synthase activity by impairing homodimerization and activation. Phosphorylation at Ser-278 by AKT (AKT1, AKT2 or AKT3) suppresses the nucleotidyltransferase activity. Phosphorylation at Ser-278 by CDK1 during mitosis leads to its inhibition, thereby preventing CGAS activation by self-DNA during mitosis. Dephosphorylated at Ser-278 by protein phosphatase PP1 upon mitotic exit. Post-translationally, ubiquitinated at Lys-389 via 'Lys-48'-linked polyubiquitin chains, leading to its SQSTM1-mediated autophagic degradation. Interaction with TRIM14 promotes recruitment of USP14, leading to deubiquitinate Lys-389 and stabilize CGAS. Ubiquitinated at Lys-359 by RNF185 via 'Lys-27'-linked polyubiquitination, promoting CGAS cyclic GMP-AMP synthase activity. Monoubiquitination at Lys-322 by TRIM56 promotes oligomerization and subsequent activation. Monoubiquitination by TRIM41 promotes CGAS activation. Ubiquitination at Lys-260 via 'Lys-48'-linked polyubiquitination promotes its degradation. Deubiquitination at Lys-260 by USP29 promotes its stabilization. Deubiquitinated by USP27X, promoting its stabilization. Ubiquitinated at Lys-386 via 'Lys-63'-linked polyubiquitin chains by MARCHF8, leading to the inhibition of its DNA binding ability. In cycling cells, nucleosome-bound CGAS is ubiquitinated at Lys-396 and Lys-397 via 'Lys-48'-linked polyubiquitin chains by the ECS(SPSB3) complex, leading to its degradation: ubiquitination and degradation of nuclear CGAS during G1 and G2 phases is required to promote low intranuclear CGAS abundance before the next mitotic cycle. In terms of processing, sumoylated at Lys-206 by TRIM38 in uninfected cells and during the early phase of viral infection, promoting its stability by preventing ubiquitination at Lys-260 and subsequent degradation. Desumoylated by SENP2 during the late phase of viral infection. Sumoylation at Lys-322, Lys-359 and Lys-369 prevents DNA-binding, oligomerization and nucleotidyltransferase activity. Desumoylation at Lys-322, Lys-359 and Lys-369 by SENP7 relieves inhibition and activates CGAS. Polyglutamylated by TTLL6 at Glu-261, leading to impair DNA-binding activity. Deglutamylated by AGBL5/CCP5 and AGBL6/CCP6. Post-translationally, acetylation at Lys-359, Lys-369 and Lys-389 inhibits the cyclic GMP-AMP synthase activity. Deacetylated upon cytosolic DNA challenge such as viral infections. Acetylation by KAT5 increases the cyclic GMP-AMP synthase activity by promoting DNA-binding and subsequent activation. In terms of processing, proteolytically cleaved by apoptotic caspases during apoptosis, leading to its inactivation. The damage of the nucleus and the mitochondria during apoptosis leads to leakage of nuclear and mitochondrial DNA, which activate CGAS: cleavage and inactivation during apoptosis in required to prevent cytokine overproduction. Cleaved by CASP7 and CASP3 during virus-induced apoptosis, thereby inactivating it and preventing cytokine overproduction. Cleaved by CASP1 upon DNA virus infection; the cleavage impairs cGAMP production. Also cleaved by the pyroptotic CASP4 during non-canonical inflammasome activation; does not cut at the same sites than CASP1. Degraded via selective autophagy following interaction with IRGM. IRGM promotes CGAS recruitment to autophagosome membranes, promoting its SQSTM1/p62-dependent autophagic degradation. Post-translationally, poly-ADP-ribosylation at Glu-165 by PARP1 impairs DNA-binding, thereby preventing the cyclic GMP-AMP synthase activity. In terms of processing, palmitoylation at Cys-449 by ZDHHC18 impairs DNA-binding, thereby preventing the cyclic GMP-AMP synthase activity. Palmitoylation at Cys-379 and Cys-380 by ZDHHC9 promotes homodimerization and cyclic GMP-AMP synthase activity. Depalmitoylation at Cys-379 and Cys-380 by LYPLAL1 impairs homodimerization and cyclic GMP-AMP synthase activity. Monomethylated at Lys-481 by SETD7. Monomethylation promotes interaction with SGF29, preventing interaction between PARP1 nad SGF29. Demethylation by RIOX1 promotes interaction with PARP1, followed by PARP1 inactivation. Post-translationally, lactylation by AARS2 prevents ability to undergo liquid-liquid phase separation (LLPS), thereby inhibiting CGAS activation.

The protein resides in the nucleus. It is found in the chromosome. Its subcellular location is the cell membrane. The protein localises to the cytoplasm. It localises to the cytosol. The catalysed reaction is GTP + ATP = 2',3'-cGAMP + 2 diphosphate. It catalyses the reaction GTP + ATP = pppGp(2'-5')A + diphosphate. The enzyme catalyses pppGp(2'-5')A = 2',3'-cGAMP + diphosphate. With respect to regulation, the enzyme activity is strongly increased by double-stranded DNA (dsDNA), but not by single-stranded DNA or RNA. DNA-binding induces the formation of liquid-like droplets in which CGAS is activated. Liquid-like droplets also create a selective environment that restricts entry of negative regulators, such as TREX1 or BANF1/BAF, allowing sensing of DNA. A number of mechanisms exist to restrict its activity toward self-DNA. The nucleotidyltransferase activity is inhibited in the nucleus via its association with nucleosomes: interacts with the acidic patch of histones H2A and H2B, thereby blocking DNA-binding and subsequent activation. CGAS is also inactive when associated with mitotic chromatin. Chromatin-bound CGAS cannot be activated by exogenous DNA in mitotic cells: phosphorylation of the N-terminal disordered part by AURKB during the G2-M transition blocks CGAS liquid phase separation and activation. Activity toward self-DNA is inhibited by BANF1/BAF upon acute loss of nuclear membrane integrity: BANF1/BAF acts by outcompeting CGAS for DNA-binding, thereby preventing CGAS activation. DNA-induced activation at micronuclei is also limited by TREX1, which degrades micronuclear DNA upon nuclear envelope rupture, thereby preventing CGAS activation. CGAS can be released from nucleosomes and activated by MRE11 component of the MRN complex, which displaces CGAS from acidic-patch-mediated sequestration. Acetylation at Lys-359, Lys-369 and Lys-389 inhibits the cyclic GMP-AMP synthase activity. Acetylation by KAT5 increases the cyclic GMP-AMP synthase activity by promoting DNA-binding and subsequent activation. Phosphorylation at Ser-278 suppresses the nucleotidyltransferase activity. Phosphorylation at Ser-410 promotes the cyclic GMP-AMP synthase activity. Phosphorylation at Ser-188 inhibits its cyclic GMP-AMP synthase activity. Ubiquitination at Lys-359 via 'Lys-27'-linked polyubiquitination enhances the cyclic GMP-AMP synthase activity. Monoubiquitination at Lys-322 promotes oligomerization and subsequent activation. Sumoylation at Lys-322, Lys-359 and Lys-369 prevents DNA-binding, oligomerization and nucleotidyltransferase activity. The enzyme activity is impaired by the cleavage by CASP1. In addition to DNA, also activated by collided ribosomes upon translation stress: specifically binds collided ribosomes, promoting its activation and triggering type-I interferon production. Functionally, nucleotidyltransferase that catalyzes the formation of cyclic GMP-AMP (2',3'-cGAMP) from ATP and GTP and plays a key role in innate immunity. Catalysis involves both the formation of a 2',5' phosphodiester linkage at the GpA step and the formation of a 3',5' phosphodiester linkage at the ApG step, producing c[G(2',5')pA(3',5')p]. Acts as a key DNA sensor: directly binds double-stranded DNA (dsDNA), inducing the formation of liquid-like droplets in which CGAS is activated, leading to synthesis of 2',3'-cGAMP, a second messenger that binds to and activates STING1, thereby triggering type-I interferon production. Preferentially binds long dsDNA (around 45 bp) and forms ladder-like networks that function cooperatively to stabilize individual cGAS-dsDNA complexes. Acts as a key foreign DNA sensor, the presence of double-stranded DNA (dsDNA) in the cytoplasm being a danger signal that triggers the immune responses. Has antiviral activity by sensing the presence of dsDNA from DNA viruses in the cytoplasm. Also acts as an innate immune sensor of infection by retroviruses by detecting the presence of reverse-transcribed DNA in the cytosol. Detection of retroviral reverse-transcribed DNA in the cytosol may be indirect and be mediated via interaction with PQBP1, which directly binds reverse-transcribed retroviral DNA. Also detects the presence of DNA from bacteria. 2',3'-cGAMP can be transferred from producing cells to neighboring cells through gap junctions, leading to promote STING1 activation and convey immune response to connecting cells. 2',3'-cGAMP can also be transferred between cells by virtue of packaging within viral particles contributing to IFN-induction in newly infected cells in a cGAS-independent but STING1-dependent manner. Also senses the presence of neutrophil extracellular traps (NETs) that are translocated to the cytosol following phagocytosis, leading to synthesis of 2',3'-cGAMP. In addition to foreign DNA, can also be activated by endogenous nuclear or mitochondrial DNA. When self-DNA leaks into the cytosol during cellular stress (such as mitochondrial stress, DNA damage, mitotic arrest or senescence), or is present in form of cytosolic micronuclei, CGAS is activated leading to a state of sterile inflammation. Acts as a regulator of cellular senescence by binding to cytosolic chromatin fragments that are present in senescent cells, leading to trigger type-I interferon production via STING1 and promote cellular senescence. Also involved in the inflammatory response to genome instability and double-stranded DNA breaks: acts by localizing to micronuclei arising from genome instability. Micronuclei, which are frequently found in cancer cells, consist of chromatin surrounded by their own nuclear membrane: following breakdown of the micronuclear envelope, a process associated with chromothripsis, CGAS binds self-DNA exposed to the cytosol, leading to 2',3'-cGAMP synthesis and subsequent activation of STING1 and type-I interferon production. In a healthy cell, CGAS is however kept inactive even in cellular events that directly expose it to self-DNA, such as mitosis, when cGAS associates with chromatin directly after nuclear envelope breakdown or remains in the form of postmitotic persistent nuclear cGAS pools bound to chromatin. Nuclear CGAS is inactivated by chromatin via direct interaction with nucleosomes, which block CGAS from DNA binding and thus prevent CGAS-induced autoimmunity. Also acts as a suppressor of DNA repair in response to DNA damage: inhibits homologous recombination repair by interacting with PARP1, the CGAS-PARP1 interaction leading to impede the formation of the PARP1-TIMELESS complex. In addition to DNA, also sense translation stress: in response to translation stress, translocates to the cytosol and associates with collided ribosomes, promoting its activation and triggering type-I interferon production. The polypeptide is Cyclic GMP-AMP synthase (Sus scrofa (Pig)).